Reading from the N-terminus, the 380-residue chain is tRNA (guanine(26)-N(2))-dimethyltransferase (380 aa).

One can recognise a Trm1 methyltransferase domain in the interval 2-374 (ITVNEGSVTI…AGIGEIEEVL (373 aa)). S-adenosyl-L-methionine-binding residues include R35, R65, D83, D109, and A110. Zn(2+) is bound by residues C242, C245, C261, and C264.

The protein belongs to the class I-like SAM-binding methyltransferase superfamily. Trm1 family.

It catalyses the reaction guanosine(26) in tRNA + 2 S-adenosyl-L-methionine = N(2)-dimethylguanosine(26) in tRNA + 2 S-adenosyl-L-homocysteine + 2 H(+). Functionally, dimethylates a single guanine residue at position 26 of a number of tRNAs using S-adenosyl-L-methionine as donor of the methyl groups. This is tRNA (guanine(26)-N(2))-dimethyltransferase from Methanothermobacter thermautotrophicus (strain ATCC 29096 / DSM 1053 / JCM 10044 / NBRC 100330 / Delta H) (Methanobacterium thermoautotrophicum).